The primary structure comprises 367 residues: UDP-galactopyranose mutase (367 aa).

FAD-binding positions include F12, 31-32, N39, and 56-57; these read EK and HI. Residue F12 coordinates UDP-alpha-D-galactose. UDP-alpha-D-galactose is bound by residues N80, T152, W156, and Y181. 212-213 is an FAD binding site; sequence DF. Residues N268, R278, and Y311 each coordinate UDP-alpha-D-galactose. FAD is bound at residue R340. Y346 contributes to the UDP-alpha-D-galactose binding site. 347 to 352 is an FAD binding site; the sequence is YDMHQV.

In terms of assembly, homodimer. FAD serves as cofactor.

It carries out the reaction UDP-alpha-D-galactose = UDP-alpha-D-galactofuranose. Its pathway is bacterial outer membrane biogenesis; lipopolysaccharide biosynthesis. In terms of biological role, catalyzes the interconversion through a 2-keto intermediate of uridine diphosphogalactopyranose (UDP-GalP) into uridine diphosphogalactofuranose (UDP-GalF). In Escherichia coli (strain K12), this protein is UDP-galactopyranose mutase (glf).